Consider the following 123-residue polypeptide: Guanine nucleotide exchange factor MSS4 (123 aa).

Methionine 1 bears the N-acetylmethionine mark. The MSS4 domain maps to 9–123 (ELVSAEGRNR…YVALERVSHE (115 aa)). Positions 23, 26, 94, and 97 each coordinate Zn(2+).

Belongs to the DSS4/MSS4 family. Interacts with RAB8A. Ubiquitous.

In terms of biological role, guanine-nucleotide-releasing protein that acts on members of the SEC4/YPT1/RAB subfamily. Stimulates GDP release from both YPT1, RAB3A and RAB10, but is less active on these proteins than on the SEC4 protein. Might play a general role in vesicular transport. The protein is Guanine nucleotide exchange factor MSS4 (RABIF) of Homo sapiens (Human).